Consider the following 139-residue polypeptide: Large-conductance mechanosensitive channel (139 aa).

The next 3 membrane-spanning stretches (helical) occupy residues 10 to 30 (FAVK…AAFG), 40 to 60 (VIMP…YYIA), and 80 to 100 (LAYG…FIIF).

The protein belongs to the MscL family. In terms of assembly, homopentamer.

It is found in the cell inner membrane. Its function is as follows. Channel that opens in response to stretch forces in the membrane lipid bilayer. May participate in the regulation of osmotic pressure changes within the cell. The polypeptide is Large-conductance mechanosensitive channel (Janthinobacterium sp. (strain Marseille) (Minibacterium massiliensis)).